Here is a 990-residue protein sequence, read N- to C-terminus: Insulin-degrading enzyme (990 aa).

His-81 is a Zn(2+) binding site. Glu-84 (proton acceptor) is an active-site residue. Zn(2+)-binding residues include His-85 and Glu-162.

It belongs to the peptidase M16 family. Zn(2+) is required as a cofactor.

The catalysed reaction is Degradation of insulin, glucagon and other polypeptides. No action on proteins.. Functionally, can cleave insulin and TGF-alpha. In Drosophila melanogaster (Fruit fly), this protein is Insulin-degrading enzyme (Ide).